A 112-amino-acid polypeptide reads, in one-letter code: Signal recognition particle 19 kDa protein (112 aa).

This sequence belongs to the SRP19 family. As to quaternary structure, part of the signal recognition particle protein translocation system, which is composed of SRP and FtsY. Archaeal SRP consists of a 7S RNA molecule of 300 nucleotides and two protein subunits: SRP54 and SRP19.

It localises to the cytoplasm. In terms of biological role, involved in targeting and insertion of nascent membrane proteins into the cytoplasmic membrane. Binds directly to 7S RNA and mediates binding of the 54 kDa subunit of the SRP. The protein is Signal recognition particle 19 kDa protein of Aeropyrum pernix (strain ATCC 700893 / DSM 11879 / JCM 9820 / NBRC 100138 / K1).